A 511-amino-acid chain; its full sequence is GATOR complex protein NPRL3 (511 aa).

The interval Lys-37–Val-58 is disordered.

The protein belongs to the NPR3 family. In terms of assembly, probably part of the GATOR complex.

Its subcellular location is the lysosome membrane. As a component of the GATOR complex may function in the amino acid-sensing branch of the TORC1 signaling pathway. The protein is GATOR complex protein NPRL3 (nprl-3) of Caenorhabditis elegans.